Consider the following 559-residue polypeptide: Terpene synthase 1 (559 aa).

Positions 312, 316, 456, and 464 each coordinate Mg(2+). Residues aspartate 312 to aspartate 316 carry the DDXXD motif motif.

This sequence belongs to the terpene synthase family. Tpsa subfamily. Requires Mg(2+) as cofactor. Mn(2+) serves as cofactor. Mostly expressed in stems and, to a lower extent, in leaves, roots and fruits.

The enzyme catalyses (2E,6E)-farnesyl diphosphate = (-)-(E)-beta-caryophyllene + diphosphate. It carries out the reaction (2E,6E)-farnesyl diphosphate = alpha-humulene + diphosphate. Its pathway is secondary metabolite biosynthesis; terpenoid biosynthesis. Functionally, sesquiterpene synthase involved in the biosynthesis of volatile compounds that contribute to the characteristic flavors of black pepper. Mediates the conversion of (2E,6E)-farnesyl diphosphate (FPP) into beta-caryophyllene and, as a minor compound, into alpha-humulene. This is Terpene synthase 1 from Piper nigrum (Black pepper).